The primary structure comprises 292 residues: L-serine dehydratase, alpha chain (292 aa).

This sequence belongs to the iron-sulfur dependent L-serine dehydratase family. As to quaternary structure, heterooctamer of four alpha chains and four beta chains. It depends on [4Fe-4S] cluster as a cofactor.

It catalyses the reaction L-serine = pyruvate + NH4(+). The protein operates within carbohydrate biosynthesis; gluconeogenesis. The sequence is that of L-serine dehydratase, alpha chain (sdhA) from Peptoniphilus asaccharolyticus (Peptostreptococcus asaccharolyticus).